The chain runs to 320 residues: Acetyl-coenzyme A carboxylase carboxyl transferase subunit alpha (320 aa).

The CoA carboxyltransferase C-terminal domain occupies 39-293; sequence ALDAKAAKLL…RGAIAAMLKE (255 aa).

This sequence belongs to the AccA family. In terms of assembly, acetyl-CoA carboxylase is a heterohexamer composed of biotin carboxyl carrier protein (AccB), biotin carboxylase (AccC) and two subunits each of ACCase subunit alpha (AccA) and ACCase subunit beta (AccD).

It localises to the cytoplasm. The enzyme catalyses N(6)-carboxybiotinyl-L-lysyl-[protein] + acetyl-CoA = N(6)-biotinyl-L-lysyl-[protein] + malonyl-CoA. It participates in lipid metabolism; malonyl-CoA biosynthesis; malonyl-CoA from acetyl-CoA: step 1/1. Its function is as follows. Component of the acetyl coenzyme A carboxylase (ACC) complex. First, biotin carboxylase catalyzes the carboxylation of biotin on its carrier protein (BCCP) and then the CO(2) group is transferred by the carboxyltransferase to acetyl-CoA to form malonyl-CoA. This is Acetyl-coenzyme A carboxylase carboxyl transferase subunit alpha from Ruegeria pomeroyi (strain ATCC 700808 / DSM 15171 / DSS-3) (Silicibacter pomeroyi).